The following is a 377-amino-acid chain: Adenosine 3'-phospho 5'-phosphosulfate transporter 2 (377 aa).

Helical transmembrane passes span Leu-50–Phe-70, Pro-77–Glu-97, Ala-115–Leu-135, Pro-138–Ile-158, Gly-164–Ala-184, Phe-195–Glu-215, Val-228–Gly-248, Gly-266–Val-286, Leu-293–Phe-313, and Phe-317–Tyr-337.

This sequence belongs to the nucleotide-sugar transporter family. SLC35B subfamily.

It is found in the golgi apparatus membrane. In terms of biological role, mediates the transport of adenosine 3'-phospho 5'-phosphosulfate (PAPS), from cytosol into Golgi. PAPS is a universal sulfuryl donor for sulfation events that take place in the Golgi. Essential for viability. Involved in glycosaminoglycan synthesis and the subsequent signaling. May be involved in hh and dpp signaling by controlling the sulfation of heparan sulfate (HS). This is Adenosine 3'-phospho 5'-phosphosulfate transporter 2 from Anopheles gambiae (African malaria mosquito).